The following is a 271-amino-acid chain: Formamidopyrimidine-DNA glycosylase (271 aa).

Catalysis depends on P2, which acts as the Schiff-base intermediate with DNA. The active-site Proton donor is E3. K58 functions as the Proton donor; for beta-elimination activity in the catalytic mechanism. The DNA site is built by H91 and R109. Residues 236 to 270 form an FPG-type zinc finger; that stretch reads FVYGREGLACRVCATPVRRVVIGQRSTFFCPRCQR. Residue R260 is the Proton donor; for delta-elimination activity of the active site.

The protein belongs to the FPG family. As to quaternary structure, monomer. Requires Zn(2+) as cofactor.

The catalysed reaction is Hydrolysis of DNA containing ring-opened 7-methylguanine residues, releasing 2,6-diamino-4-hydroxy-5-(N-methyl)formamidopyrimidine.. It carries out the reaction 2'-deoxyribonucleotide-(2'-deoxyribose 5'-phosphate)-2'-deoxyribonucleotide-DNA = a 3'-end 2'-deoxyribonucleotide-(2,3-dehydro-2,3-deoxyribose 5'-phosphate)-DNA + a 5'-end 5'-phospho-2'-deoxyribonucleoside-DNA + H(+). Functionally, involved in base excision repair of DNA damaged by oxidation or by mutagenic agents. Acts as a DNA glycosylase that recognizes and removes damaged bases. Has a preference for oxidized purines, such as 7,8-dihydro-8-oxoguanine (8-oxoG). Has AP (apurinic/apyrimidinic) lyase activity and introduces nicks in the DNA strand. Cleaves the DNA backbone by beta-delta elimination to generate a single-strand break at the site of the removed base with both 3'- and 5'-phosphates. The chain is Formamidopyrimidine-DNA glycosylase from Aromatoleum aromaticum (strain DSM 19018 / LMG 30748 / EbN1) (Azoarcus sp. (strain EbN1)).